The sequence spans 196 residues: Carnitine operon protein CaiE (196 aa).

Positions 173 to 196 are disordered; that stretch reads TQPLRQMEGNRPRLQGTTDVAPKR.

Belongs to the transferase hexapeptide repeat family.

Its pathway is amine and polyamine metabolism; carnitine metabolism. Overproduction of CaiE stimulates the activity of CaiB and CaiD. In Escherichia coli (strain SMS-3-5 / SECEC), this protein is Carnitine operon protein CaiE.